The following is a 369-amino-acid chain: Phenylalanine--tRNA ligase alpha subunit (369 aa).

Glutamate 269 provides a ligand contact to Mg(2+).

The protein belongs to the class-II aminoacyl-tRNA synthetase family. Phe-tRNA synthetase alpha subunit type 1 subfamily. In terms of assembly, tetramer of two alpha and two beta subunits. Mg(2+) serves as cofactor.

The protein localises to the cytoplasm. The enzyme catalyses tRNA(Phe) + L-phenylalanine + ATP = L-phenylalanyl-tRNA(Phe) + AMP + diphosphate + H(+). The polypeptide is Phenylalanine--tRNA ligase alpha subunit (Brucella canis (strain ATCC 23365 / NCTC 10854 / RM-666)).